The primary structure comprises 325 residues: MEEWTLLFVLILSFAAAVIMSPLFIPFLRKLKFGQSIREEGPKSHQKKSGTPTMGGIVIVLSIFISALAIGIAITGFTPELLLLMVVTLGYGIVGFVDDYLKVVRKHNLGLTSKQKLAGQLVIAAIFYIGLLAIGFDTFIAIPGTTFGFDLGWLYLILIVLMLLGASNAVNLTDGLDGLLAGTGSIAFGAFAILAWSGGFIDTALFSTAITGALLGFLVFNAHPAKVFMGDTGSLALGGAIAAIAILTKMELMLIIVGGVFVIETLSVIIQVASFKLTGKRVFRMSPLHHHYELVGWSEWRVVVTFWLVGMIFAIMGVYIGVWLT.

9 consecutive transmembrane segments (helical) span residues 7 to 27 (LFVLILSFAAAVIMSPLFIPF), 57 to 77 (IVIVLSIFISALAIGIAITGF), 81 to 101 (LLLLMVVTLGYGIVGFVDDYL), 122 to 142 (VIAAIFYIGLLAIGFDTFIAI), 146 to 166 (TFGFDLGWLYLILIVLMLLGA), 186 to 206 (IAFGAFAILAWSGGFIDTALF), 227 to 247 (VFMGDTGSLALGGAIAAIAIL), 252 to 272 (LMLIIVGGVFVIETLSVIIQV), and 302 to 322 (VVVTFWLVGMIFAIMGVYIGV).

This sequence belongs to the glycosyltransferase 4 family. MraY subfamily. The cofactor is Mg(2+).

It localises to the cell membrane. It catalyses the reaction UDP-N-acetyl-alpha-D-muramoyl-L-alanyl-gamma-D-glutamyl-meso-2,6-diaminopimeloyl-D-alanyl-D-alanine + di-trans,octa-cis-undecaprenyl phosphate = di-trans,octa-cis-undecaprenyl diphospho-N-acetyl-alpha-D-muramoyl-L-alanyl-D-glutamyl-meso-2,6-diaminopimeloyl-D-alanyl-D-alanine + UMP. It participates in cell wall biogenesis; peptidoglycan biosynthesis. Catalyzes the initial step of the lipid cycle reactions in the biosynthesis of the cell wall peptidoglycan: transfers peptidoglycan precursor phospho-MurNAc-pentapeptide from UDP-MurNAc-pentapeptide onto the lipid carrier undecaprenyl phosphate, yielding undecaprenyl-pyrophosphoryl-MurNAc-pentapeptide, known as lipid I. In Shouchella clausii (strain KSM-K16) (Alkalihalobacillus clausii), this protein is Phospho-N-acetylmuramoyl-pentapeptide-transferase.